Consider the following 223-residue polypeptide: Endonuclease V (223 aa).

Mg(2+) contacts are provided by aspartate 35 and aspartate 103.

It belongs to the endonuclease V family. It depends on Mg(2+) as a cofactor.

It is found in the cytoplasm. The enzyme catalyses Endonucleolytic cleavage at apurinic or apyrimidinic sites to products with a 5'-phosphate.. DNA repair enzyme involved in the repair of deaminated bases. Selectively cleaves double-stranded DNA at the second phosphodiester bond 3' to a deoxyinosine leaving behind the intact lesion on the nicked DNA. The chain is Endonuclease V from Klebsiella pneumoniae subsp. pneumoniae (strain ATCC 700721 / MGH 78578).